The following is a 733-amino-acid chain: Photosystem I P700 chlorophyll a apoprotein A2 (733 aa).

The next 8 helical transmembrane spans lie at 46–69, 135–158, 175–199, 273–291, 330–353, 369–395, 417–439, and 516–534; these read IFAS…FHVA, LYNG…LHLQ, LNHH…HVAI, MAHH…GHQY, LHFQ…QHMY, AALY…IFFI, AIIS…LYVH, and FLVH…LILV. Residues C558 and C567 each contribute to the [4Fe-4S] cluster site. Transmembrane regions (helical) follow at residues 574–595 and 642–664; these read AFYL…YFHW and LSVW…MFLI. Residues H653, M661, and Y669 each contribute to the chlorophyll a site. W670 contacts phylloquinone. A helical transmembrane segment spans residues 706–726; sequence LVGLTHFAVGFVLTYAAFVIA.

The protein belongs to the PsaA/PsaB family. The PsaA/B heterodimer binds the P700 chlorophyll special pair and subsequent electron acceptors. PSI consists of a core antenna complex that captures photons, and an electron transfer chain that converts photonic excitation into a charge separation. The eukaryotic PSI reaction center is composed of at least 11 subunits. It depends on P700 is a chlorophyll a/chlorophyll a' dimer, A0 is one or more chlorophyll a, A1 is one or both phylloquinones and FX is a shared 4Fe-4S iron-sulfur center. as a cofactor.

The protein localises to the plastid. The protein resides in the chloroplast thylakoid membrane. The enzyme catalyses reduced [plastocyanin] + hnu + oxidized [2Fe-2S]-[ferredoxin] = oxidized [plastocyanin] + reduced [2Fe-2S]-[ferredoxin]. In terms of biological role, psaA and PsaB bind P700, the primary electron donor of photosystem I (PSI), as well as the electron acceptors A0, A1 and FX. PSI is a plastocyanin/cytochrome c6-ferredoxin oxidoreductase, converting photonic excitation into a charge separation, which transfers an electron from the donor P700 chlorophyll pair to the spectroscopically characterized acceptors A0, A1, FX, FA and FB in turn. Oxidized P700 is reduced on the lumenal side of the thylakoid membrane by plastocyanin or cytochrome c6. This chain is Photosystem I P700 chlorophyll a apoprotein A2, found in Ostreococcus tauri.